Consider the following 197-residue polypeptide: Carnitine operon protein CaiE (197 aa).

This sequence belongs to the transferase hexapeptide repeat family.

It functions in the pathway amine and polyamine metabolism; carnitine metabolism. Functionally, overproduction of CaiE stimulates the activity of CaiB and CaiD. The sequence is that of Carnitine operon protein CaiE from Citrobacter koseri (strain ATCC BAA-895 / CDC 4225-83 / SGSC4696).